The primary structure comprises 215 residues: Proapoptotic nucleolar protein 1 (215 aa).

Residues 35 to 215 (RKGTPTARCL…RLPAPRSAST (181 aa)) are disordered. A compositionally biased stretch (pro residues) spans 169 to 180 (PRPPQHLSPPQP). Residues 185-215 (MGAAEGSRRADTHHARRRRRARLPAPRSAST) are necessary for nucleolar localization.

Widely expressed.

It is found in the nucleus. It localises to the nucleolus. Its function is as follows. Apoptosis-inducing protein that modulates the tumor suppressor function of CDKN2A/p14ARF. Enhances the stability of CDKN2A/p14ARF protein by protecting it from degradation. May act as a tumor suppressor. This Homo sapiens (Human) protein is Proapoptotic nucleolar protein 1.